The primary structure comprises 525 residues: Nucleolar and spindle-associated protein 1-A (525 aa).

4 disordered regions span residues 46-205 (ESKD…LHEA), 248-292 (EKTP…RFSA), 373-397 (TPES…PEKA), and 451-525 (SLSR…VPVQ). Residues 58–69 (SSLTDTDELNSS) are compositionally biased toward polar residues. Over residues 82–92 (THRRGRGRKPL) the composition is skewed to basic residues. Over residues 106–127 (SVGTGTESLASETDNTQDQNCL) the composition is skewed to polar residues. A compositionally biased stretch (basic and acidic residues) spans 160–169 (TTEKRQKKAS). Positions 270–285 (PPTTGASPSRTPTNQR) are enriched in polar residues. The segment covering 476–494 (CGSNNNVSVLKNNFKQPHL) has biased composition (polar residues). Residues 495-514 (QTREDRRKQHEQDRKGKRDQ) show a composition bias toward basic and acidic residues.

The protein belongs to the NUSAP family. As to quaternary structure, interacts with DNA. Interacts with microtubules, ipo7, kpna2 and kpnb1. Microtubule stabilization is inhibited by ipo7 and kpna2, while microtubule bundling is inhibited by kpnb1. Active GTP-bound ran causes dissociation of ipo7 and kpnb1.

It is found in the cytoplasm. The protein resides in the nucleus. It localises to the cytoskeleton. Its subcellular location is the spindle. In terms of biological role, microtubule-associated protein with the capacity to bundle and stabilize microtubules. May associate with chromosomes and promote the organization of meiotic or mitotic spindle microtubules around them. This chain is Nucleolar and spindle-associated protein 1-A (nusap1-a), found in Xenopus laevis (African clawed frog).